The following is a 227-amino-acid chain: Large ribosomal subunit protein uL3 (227 aa).

The interval 144–166 is disordered; that stretch reads RRGPMAHGSKNHRLPGSTGPGTT.

Belongs to the universal ribosomal protein uL3 family. As to quaternary structure, part of the 50S ribosomal subunit. Forms a cluster with proteins L14 and L19.

In terms of biological role, one of the primary rRNA binding proteins, it binds directly near the 3'-end of the 23S rRNA, where it nucleates assembly of the 50S subunit. This Trichodesmium erythraeum (strain IMS101) protein is Large ribosomal subunit protein uL3.